Here is a 159-residue protein sequence, read N- to C-terminus: Oleosin Cor a 12 (159 aa).

A compositionally biased stretch (polar residues) spans 1–10; it reads MADRPQQLQV. The disordered stretch occupies residues 1–24; that stretch reads MADRPQQLQVHPQRGHGHYEGGIK. Transmembrane regions (helical) follow at residues 45–65, 70–90, and 92–112; these read VGGT…IGLL, LFII…LAVA, and FLSS…VLNY.

The protein belongs to the oleosin family. In terms of tissue distribution, expressed in seeds.

Its subcellular location is the lipid droplet. It is found in the membrane. Its function is as follows. May have a structural role to stabilize the lipid body during desiccation of the seed by preventing coalescence of the oil. Probably interacts with both lipid and phospholipid moieties of lipid bodies. May also provide recognition signals for specific lipase anchorage in lipolysis during seedling growth. The protein is Oleosin Cor a 12 of Corylus avellana (European hazel).